The primary structure comprises 912 residues: Protein translocase subunit SecA (912 aa).

Residues Gln-87, 105 to 109 (GEGKT), and Asp-510 contribute to the ATP site. The disordered stretch occupies residues 854–912 (KLRHEQASAAQAEGEGDDGQQGQQATPETFVRQERKVGRNEPCPCGSGKKYKQCCGKVS). Zn(2+)-binding residues include Cys-896, Cys-898, Cys-907, and Cys-908.

It belongs to the SecA family. In terms of assembly, monomer and homodimer. Part of the essential Sec protein translocation apparatus which comprises SecA, SecYEG and auxiliary proteins SecDF-YajC and YidC. Zn(2+) serves as cofactor.

The protein localises to the cell inner membrane. It localises to the cytoplasm. It carries out the reaction ATP + H2O + cellular proteinSide 1 = ADP + phosphate + cellular proteinSide 2.. Functionally, part of the Sec protein translocase complex. Interacts with the SecYEG preprotein conducting channel. Has a central role in coupling the hydrolysis of ATP to the transfer of proteins into and across the cell membrane, serving both as a receptor for the preprotein-SecB complex and as an ATP-driven molecular motor driving the stepwise translocation of polypeptide chains across the membrane. The protein is Protein translocase subunit SecA of Marinobacter nauticus (strain ATCC 700491 / DSM 11845 / VT8) (Marinobacter aquaeolei).